Here is a 193-residue protein sequence, read N- to C-terminus: Phosphoheptose isomerase (193 aa).

In terms of domain architecture, SIS spans 37–193 (LADSFKVGGK…QLIEKEMVKA (157 aa)). Position 52 to 54 (52 to 54 (NGG)) interacts with substrate. His-61 and Glu-65 together coordinate Zn(2+). Substrate-binding positions include Glu-65, 93-94 (ND), 119-121 (STS), Ser-124, and Gln-172. 2 residues coordinate Zn(2+): Gln-172 and His-180.

It belongs to the SIS family. GmhA subfamily. In terms of assembly, homotetramer. Requires Zn(2+) as cofactor.

It localises to the cytoplasm. The catalysed reaction is 2 D-sedoheptulose 7-phosphate = D-glycero-alpha-D-manno-heptose 7-phosphate + D-glycero-beta-D-manno-heptose 7-phosphate. It functions in the pathway carbohydrate biosynthesis; D-glycero-D-manno-heptose 7-phosphate biosynthesis; D-glycero-alpha-D-manno-heptose 7-phosphate and D-glycero-beta-D-manno-heptose 7-phosphate from sedoheptulose 7-phosphate: step 1/1. Its pathway is bacterial outer membrane biogenesis; LPS core biosynthesis. In terms of biological role, catalyzes the isomerization of sedoheptulose 7-phosphate in D-glycero-D-manno-heptose 7-phosphate. The chain is Phosphoheptose isomerase from Photorhabdus laumondii subsp. laumondii (strain DSM 15139 / CIP 105565 / TT01) (Photorhabdus luminescens subsp. laumondii).